We begin with the raw amino-acid sequence, 295 residues long: 4-hydroxy-tetrahydrodipicolinate synthase (295 aa).

Thr-47 lines the pyruvate pocket. The active-site Proton donor/acceptor is the Tyr-135. Lys-163 functions as the Schiff-base intermediate with substrate in the catalytic mechanism. Ile-206 provides a ligand contact to pyruvate.

The protein belongs to the DapA family. In terms of assembly, homodimer.

The protein resides in the cytoplasm. It carries out the reaction L-aspartate 4-semialdehyde + pyruvate = (2S,4S)-4-hydroxy-2,3,4,5-tetrahydrodipicolinate + H2O + H(+). It participates in amino-acid biosynthesis; L-lysine biosynthesis via DAP pathway; (S)-tetrahydrodipicolinate from L-aspartate: step 3/4. Is not feedback inhibited by lysine. Its function is as follows. Catalyzes the condensation of (S)-aspartate-beta-semialdehyde [(S)-ASA] and pyruvate to 4-hydroxy-tetrahydrodipicolinate (HTPA). The polypeptide is 4-hydroxy-tetrahydrodipicolinate synthase (Staphylococcus aureus (strain COL)).